Reading from the N-terminus, the 305-residue chain is NDP-polyphosphate phosphotransferase 1 (305 aa).

The protein belongs to the polyphosphate kinase 2 (PPK2) family. Class I subfamily.

The catalysed reaction is [phosphate](n) + ATP = [phosphate](n+1) + ADP. It catalyses the reaction [phosphate](n) + CTP = [phosphate](n+1) + CDP. The enzyme catalyses [phosphate](n) + GTP = [phosphate](n+1) + GDP. It carries out the reaction [phosphate](n) + UTP = [phosphate](n+1) + UDP. Shows little dependence on metals. Functionally, uses inorganic polyphosphate (polyP) as a donor to convert NDP to NTP. PolyP hydrolysis is slightly faster with GDP, but it can also use ADP, CDP and UDP. This chain is NDP-polyphosphate phosphotransferase 1, found in Ruegeria pomeroyi (strain ATCC 700808 / DSM 15171 / DSS-3) (Silicibacter pomeroyi).